A 255-amino-acid polypeptide reads, in one-letter code: MAAAAAATAAAKGNGGGGGRAGAGDASGTRKKKGPGPLATAYLVIYNVVMTAGWLVIAVGLVRAYLAKGSYHSLYYSIEKPLKFFQTGALLEILHCAIGIVPSSVVLTSFQVMSRVFLIWAVTHSVKEVQSEDSVLLFVIAWTITEIIRYSFYTFSLLNHLPYLIKWARYTLFIVLYPMGVSGELLTIYAALPFVRQAGLYSISLPNKYNFSFDYYAFLILIMISYIPIFPQLYFHMIHQRRKILSHTEEHKKFE.

The Cytoplasmic segment spans residues 3 to 42 (AAAAATAAAKGNGGGGGRAGAGDASGTRKKKGPGPLATAY). The segment at 11–34 (AKGNGGGGGRAGAGDASGTRKKKG) is disordered. A compositionally biased stretch (gly residues) spans 13–22 (GNGGGGGRAG). Residues 43 to 61 (LVIYNVVMTAGWLVIAVGL) traverse the membrane as a helical segment. Residues 62–80 (VRAYLAKGSYHSLYYSIEK) lie on the Lumenal side of the membrane. The chain crosses the membrane as a helical span at residues 81-98 (PLKFFQTGALLEILHCAI). Residues 99-108 (GIVPSSVVLT) are Cytoplasmic-facing. Residues 109-126 (SFQVMSRVFLIWAVTHSV) form a helical membrane-spanning segment. At 127–131 (KEVQS) the chain is on the lumenal side. A helical membrane pass occupies residues 132–147 (EDSVLLFVIAWTITEI). The Cytoplasmic segment spans residues 148 to 170 (IRYSFYTFSLLNHLPYLIKWARY). A helical transmembrane segment spans residues 171 to 188 (TLFIVLYPMGVSGELLTI). Active-site residues include Tyr-177 and Glu-184. The Lumenal portion of the chain corresponds to 189–218 (YAALPFVRQAGLYSISLPNKYNFSFDYYAF). A may be involved in interaction with TECR region spans residues 199 to 215 (GLYSISLPNKYNFSFDY). Asn-210 is a glycosylation site (N-linked (GlcNAc...) asparagine). The helical transmembrane segment at 219–236 (LILIMISYIPIFPQLYFH) threads the bilayer. Topologically, residues 237–255 (MIHQRRKILSHTEEHKKFE) are cytoplasmic.

This sequence belongs to the very long-chain fatty acids dehydratase HACD family. May interact with enzymes of the ELO family (including ELOVL1); with those enzymes that mediate condensation, the first of the four steps of the reaction cycle responsible for fatty acids elongation, may be part of a larger fatty acids elongase complex. Interacts with BCAP31. Interacts (via the third lumenal loop) with TECR.

The protein localises to the endoplasmic reticulum membrane. The catalysed reaction is a very-long-chain (3R)-3-hydroxyacyl-CoA = a very-long-chain (2E)-enoyl-CoA + H2O. It carries out the reaction (3R)-hydroxyhexadecanoyl-CoA = (2E)-hexadecenoyl-CoA + H2O. It catalyses the reaction (3R)-hydroxyoctadecanoyl-CoA = (2E)-octadecenoyl-CoA + H2O. The enzyme catalyses (3R)-hydroxyeicosanoyl-CoA = (2E)-eicosenoyl-CoA + H2O. The catalysed reaction is (3R)-hydroxydocosanoyl-CoA = (2E)-docosenoyl-CoA + H2O. It carries out the reaction (3R)-hydroxytetracosanoyl-CoA = (2E)-tetracosenoyl-CoA + H2O. It catalyses the reaction (3R)-hydroxyhexacosanoyl-CoA = (2E)-hexacosenoyl-CoA + H2O. Its pathway is lipid metabolism; fatty acid biosynthesis. Functionally, catalyzes the third of the very long-chain fatty acids (VLCFA) elongation four-step cycle (condensation, reduction, dehydration, and reduction). This endoplasmic reticulum-elongation process is characterized by the addition of two carbons to the lipid chain through each cycle. This enzyme catalyzes the dehydration of the 3-hydroxyacyl-CoA intermediate into trans-2,3-enoyl-CoA, within each cycle of elongation. Therefore, it participates in the production of various VLCFAs involved in multiple biological processes as precursors of membrane lipids and lipid mediators. This chain is Very-long-chain (3R)-3-hydroxyacyl-CoA dehydratase 2, found in Pongo abelii (Sumatran orangutan).